We begin with the raw amino-acid sequence, 226 residues long: Cytidylate kinase (226 aa).

Residue 9–17 coordinates ATP; that stretch reads GPAGAGKST.

This sequence belongs to the cytidylate kinase family. Type 1 subfamily.

Its subcellular location is the cytoplasm. The catalysed reaction is CMP + ATP = CDP + ADP. It carries out the reaction dCMP + ATP = dCDP + ADP. The protein is Cytidylate kinase of Clostridium tetani (strain Massachusetts / E88).